The sequence spans 245 residues: P2Y purinoceptor 13 (245 aa).

Topologically, residues 1 to 9 (QLRAFVCRL) are extracellular. Cys7 and Cys85 are disulfide-bonded. Residues 10-30 (SSVIFYETMYVGIVLLGLIAF) form a helical membrane-spanning segment. The Cytoplasmic segment spans residues 31 to 35 (DRFLK). A helical membrane pass occupies residues 36-56 (IIRPLRNIFLKKTVFAKTVSV). Topologically, residues 57-85 (FIWSFFFFISLPNMILSNKEATPSSVKKC) are extracellular. Residues 86–106 (ASLKGPLGLKWHQIVNNISQF) form a helical membrane-spanning segment. Residues 107 to 126 (IFWTVFVLMLVFYVVIAKKV) are Cytoplasmic-facing. A helical membrane pass occupies residues 127–147 (YDSYRKSKSKDRKNNKKLEGK). Residues 148–174 (VFVVVAVFFVCFAPFHFTRVPYTYSQT) are Extracellular-facing. A helical membrane pass occupies residues 175–195 (NNKTDCRLQNQLFIAKETTLF). Topologically, residues 196–245 (LAATNICMDPLIYIFLCKKFTEKLPCMRGRKTIASSQENQSSQTDNITLG) are cytoplasmic.

It belongs to the G-protein coupled receptor 1 family.

It localises to the cell membrane. In terms of biological role, receptor for ADP. Coupled to G(i)-proteins. May play a role in hematopoiesis and the immune system. In Macaca fascicularis (Crab-eating macaque), this protein is P2Y purinoceptor 13 (P2RY13).